The sequence spans 269 residues: Protein tio (269 aa).

The segment covering 1–12 (MANEPQEHEEGK) has biased composition (basic and acidic residues). The segment at 1 to 127 (MANEPQEHEE…NETKCPDEQN (127 aa)) is disordered. The Cytoplasmic portion of the chain corresponds to 1–246 (MANEPQEHEE…VEKKLTCVIC (246 aa)). The span at 27-41 (PNIPQDPTPGTPPGP) shows a compositional bias: pro residues. The segment covering 61 to 74 (SEGPPDGSGNSSPP) has biased composition (low complexity). Composition is skewed to polar residues over residues 91–101 (SESGGNNSAPN) and 114–127 (AGNG…DEQN). At Y136 the chain carries Phosphotyrosine; by host LCK. Positions 158–167 (EEERSPFNKY) are CSKH/LBD2. The SH3B/LBD1 stretch occupies residues 186 to 195 (IPPPQLPPRP). Residues 247–267 (LLIGILVLLILLFMLGFLFLL) form a helical membrane-spanning segment. The Extracellular portion of the chain corresponds to 268 to 269 (MK).

As to quaternary structure, homodimer. Binds SH3 domain of host LYN, HCK, LCK, SRC, FYN or YES. When tyrosine-phosphorylated, binds to the SH2 domain of host LCK, SRC, or FYN. In terms of processing, phosphorylated by host LCK, SRC and less efficiently by FYN.

Its subcellular location is the host cell membrane. In terms of biological role, transforms host T-cells, inducing T-cell lymphomia in the host. Activates at least SRC and LCK tyrosines kinases, thereby activating signaling pathway transforming host T-cells. Human T-cells transformed ex vivo display a IL2 indenpendent growth phenotype. This Ateles (AtHV-3) protein is Protein tio.